Reading from the N-terminus, the 251-residue chain is Large ribosomal subunit protein uL3 (251 aa).

N5-methylglutamine is present on Q151. Residues 221–251 form a disordered region; the sequence is GLKQAANSNDSAAADTPAEVAAVEATEGQEG. The segment covering 225–251 has biased composition (low complexity); sequence AANSNDSAAADTPAEVAAVEATEGQEG.

Belongs to the universal ribosomal protein uL3 family. Part of the 50S ribosomal subunit. Forms a cluster with proteins L14 and L19. Post-translationally, methylated by PrmB.

One of the primary rRNA binding proteins, it binds directly near the 3'-end of the 23S rRNA, where it nucleates assembly of the 50S subunit. This chain is Large ribosomal subunit protein uL3, found in Novosphingobium aromaticivorans (strain ATCC 700278 / DSM 12444 / CCUG 56034 / CIP 105152 / NBRC 16084 / F199).